The chain runs to 166 residues: Methylmalonyl-CoA epimerase, mitochondrial (166 aa).

The transit peptide at 1–23 (MFKQLIKTTLTNSRSFSTNTGSG) directs the protein to the mitochondrion. The region spanning 37-166 (KLNHVAIATP…NGVLVELEEK (130 aa)) is the VOC domain. His-40, His-112, and Glu-162 together coordinate Co(2+).

The protein belongs to the methylmalonyl-CoA epimerase family.

It localises to the mitochondrion. The catalysed reaction is (R)-methylmalonyl-CoA = (S)-methylmalonyl-CoA. Methylmalonyl-CoA epimerase involved in propionyl-CoA metabolism. This Dictyostelium discoideum (Social amoeba) protein is Methylmalonyl-CoA epimerase, mitochondrial (mcee).